Consider the following 171-residue polypeptide: UPF0690 protein C1orf52 homolog A (171 aa).

Disordered regions lie at residues 1–56 and 126–171; these read MAAE…GPDE and NVYQ…KRKV. The segment covering 47–56 has biased composition (basic and acidic residues); the sequence is EAKKLPGPDE. The span at 146–160 shows a compositional bias: acidic residues; it reads EEEAQEDSPPSDDEQ.

It belongs to the UPF0690 family.

In Xenopus laevis (African clawed frog), this protein is UPF0690 protein C1orf52 homolog A.